Consider the following 223-residue polypeptide: MTKQQANWSPYDNNGGTCVAVAGADYCVIAADTRMSTGYNILTRDYSKIIKLADKCVMASSGFQADVRALQKVLASRHLIYQHQHNKQMSCPAMGQLLSNTLYYKRFFPYYSFNVLGGLDSEGKGCVFTYDAVGSYERVGYSSQGSGSTLIMPFLDNQLKSPSPLLLPAQDAVTPLSEAEAIDLVKTCFASATERDIYTGDRLEIVILNASGIRREEMELRKD.

The protein belongs to the peptidase T1B family. In terms of assembly, the 26S proteasome consists of a 20S proteasome core and two 19S regulatory subunits. The 20S proteasome core is composed of 28 subunits that are arranged in four stacked rings, resulting in a barrel-shaped structure. The two end rings are each formed by seven alpha subunits, and the two central rings are each formed by seven beta subunits. The catalytic chamber with the active sites is on the inside of the barrel.

The protein resides in the cytoplasm. It is found in the nucleus. Its function is as follows. Non-catalytic component of the proteasome, a multicatalytic proteinase complex which is characterized by its ability to cleave peptides with Arg, Phe, Tyr, Leu, and Glu adjacent to the leaving group at neutral or slightly basic pH. The proteasome has an ATP-dependent proteolytic activity. The protein is Proteasome subunit beta type-1 (PBF1) of Petunia hybrida (Petunia).